A 408-amino-acid polypeptide reads, in one-letter code: Phosphoglycerate kinase (408 aa).

Residues 24–26 (DIN), Arg40, 63–66 (HQGR), Arg120, and Arg160 each bind substrate. ATP-binding positions include Glu331 and 357–360 (GGHM).

This sequence belongs to the phosphoglycerate kinase family.

Its subcellular location is the cytoplasm. It catalyses the reaction (2R)-3-phosphoglycerate + ATP = (2R)-3-phospho-glyceroyl phosphate + ADP. It functions in the pathway carbohydrate degradation; glycolysis; pyruvate from D-glyceraldehyde 3-phosphate: step 2/5. The chain is Phosphoglycerate kinase (pgk) from Saccharolobus solfataricus (strain ATCC 35092 / DSM 1617 / JCM 11322 / P2) (Sulfolobus solfataricus).